The chain runs to 113 residues: Holo-[acyl-carrier-protein] synthase (113 aa).

2 residues coordinate Mg(2+): D8 and E57.

The protein belongs to the P-Pant transferase superfamily. AcpS family. Mg(2+) serves as cofactor.

The protein localises to the cytoplasm. The enzyme catalyses apo-[ACP] + CoA = holo-[ACP] + adenosine 3',5'-bisphosphate + H(+). In terms of biological role, transfers the 4'-phosphopantetheine moiety from coenzyme A to a Ser of acyl-carrier-protein. This Thermodesulfovibrio yellowstonii (strain ATCC 51303 / DSM 11347 / YP87) protein is Holo-[acyl-carrier-protein] synthase.